Reading from the N-terminus, the 595-residue chain is Estrogen receptor (595 aa).

The segment at 1-184 (MTMTLHTKAS…AMESAKETRY (184 aa)) is modulating (transactivation AF-1); mediates interaction with MACROD1. An O-linked (GlcNAc) serine glycan is attached at Ser-10. Positions 35–47 (LERPLGEVYVDSS) are required for interaction with NCOA1. An interaction with DDX5; self-association region spans residues 35-174 (LERPLGEVYV…LASTSDKGSM (140 aa)). Phosphoserine; by CDK2 is present on residues Ser-104 and Ser-106. Phosphoserine is present on Ser-118. The tract at residues 144 to 174 (AGPPAFYRPNSDNRRQGGRERLASTSDKGSM) is disordered. Basic and acidic residues predominate over residues 154–165 (SDNRRQGGRERL). A Phosphoserine; by CK2 modification is found at Ser-167. 2 consecutive NR C4-type zinc fingers follow at residues 185-205 (CAVC…CEGC) and 221-245 (CPAT…LRKC). The nuclear receptor DNA-binding region spans 185 to 250 (CAVCNDYASG…RLRKCYEVGM (66 aa)). Residues 185–310 (CAVCNDYASG…TKKNSPVLSL (126 aa)) form a mediates interaction with DNTTIP2 region. The hinge stretch occupies residues 251 to 310 (MKGGIRKDRRGGRMLKHKRQRDDGEGRNEAVPPGDMRSANLWPSPLLIKHTKKNSPVLSL). The span at 257-269 (KDRRGGRMLKHKR) shows a compositional bias: basic residues. The tract at residues 257 to 288 (KDRRGGRMLKHKRQRDDGEGRNEAVPPGDMRS) is disordered. At Arg-260 the chain carries Asymmetric dimethylarginine; by PRMT1. Residues 262–595 (GRMLKHKRQR…GEAENFPTTI (334 aa)) are interaction with AKAP13. A self-association region spans residues 264–594 (MLKHKRQRDD…TGEAENFPTT (331 aa)). Residues 311–547 (TADQMISALL…DLLLEMLDAH (237 aa)) enclose the NR LBD domain. A transactivation AF-2 region spans residues 311 to 594 (TADQMISALL…TGEAENFPTT (284 aa)). Residues Glu-353 and Arg-394 each contribute to the 17beta-estradiol site. Residue Cys-447 is the site of S-palmitoyl cysteine attachment. Position 524 (His-524) interacts with 17beta-estradiol. A Phosphotyrosine; by Tyr-kinases modification is found at Tyr-537. The tract at residues 551–575 (APTNLGGPPPEDMSQSQLATSGSTP) is disordered. Residues 563 to 575 (MSQSQLATSGSTP) are compositionally biased toward polar residues.

This sequence belongs to the nuclear hormone receptor family. NR3 subfamily. In terms of assembly, binds DNA as a homodimer. Can form a heterodimer with ESR2. Interacts with coactivator NCOA5. Interacts with PELP1, the interaction is enhanced by 17-beta-estradiol; the interaction increases ESR1 transcriptional activity. Interacts with NCOA7; the interaction is ligand-inducible. Interacts with AKAP13, CUEDC2, HEXIM1, KDM5A, MAP1S, SMARD1, and UBE1C. Interacts with MUC1; the interaction is stimulated by 7 beta-estradiol (E2) and enhances ESR1-mediated transcription. Interacts with DNTTIP2, and UIMC1. Interacts with KMT2D/MLL2. Interacts with ATAD2; the interaction is enhanced by estradiol. Interacts with KIF18A and LDB1. Interacts with RLIM (via its C-terminus). Interacts with MACROD1. Interacts with SH2D4A and PLCG. Interacts with SH2D4A; the interaction blocks binding to PLCG and inhibits estrogen-induced cell proliferation. Interacts with DYNLL1. Interacts with CCDC62; the interaction requires estradiol and appears to enhance the transcription of target genes. Interacts with NR2C1; the interaction prevents homodimerization of ESR1 and suppresses its transcriptional activity and cell growth. Interacts with DNAAF4. Interacts with PRMT2. Interacts with RBFOX2. Interacts with EP300; the interaction is estrogen-dependent and enhanced by CITED1. Interacts with CITED1; the interaction is estrogen-dependent. Interacts with FAM120B, FOXL2, PHB2 and SLC30A9. Interacts with coactivators NCOA3 and NCOA6. Interacts with STK3/MST2 only in the presence of SAV1 and vice-versa. Binds to CSNK1D. Interacts with NCOA2; NCOA2 can interact with ESR1 AF-1 and AF-2 domains simultaneously and mediate their transcriptional synergy. Interacts with DDX5. Interacts with NCOA1; the interaction seems to require a self-association of N-terminal and C-terminal regions. Interacts with ZNF366, DDX17, NFKB1, RELA, SP1 and SP3. Interacts with NRIP1. Interacts with GPER1; the interaction occurs in an estrogen-dependent manner. Interacts with CLOCK and the interaction is stimulated by estrogen. Interacts with TRIP4 (ufmylated); estrogen dependent. Interacts with LMTK3; the interaction phosphorylates ESR1 (in vitro) and protects it against proteasomal degradation. Interacts with CCAR2 (via N-terminus) in a ligand-independent manner. Interacts with ZFHX3. Interacts with SFR1 in a ligand-dependent and -independent manner. Interacts with DCAF13, LATS1 and DCAF1; regulates ESR1 ubiquitination and ubiquitin-mediated proteasomal degradation. Interacts (via DNA-binding domain) with POU4F2 (C-terminus); this interaction increases the estrogen receptor ESR1 transcriptional activity in a DNA- and ligand 17-beta-estradiol-independent manner. Interacts with ESRRB isoform 1. Interacts with UBE3A and WBP2. Interacts with GTF2B. Interacts with RBM39. In the absence of hormonal ligand, interacts with TACC1. Interacts with PI3KR1 or PI3KR2 and PTK2/FAK1. Interacts with SRC. Interacts with BAG1; the interaction is promoted in the absence of estradiol (17-beta-estradiol/E2). Interacts with and ubiquitinated by STUB1; the interaction is promoted in the absence of estradiol (17-beta-estradiol/E2). Interacts with NEDD8. In terms of processing, phosphorylated by cyclin A/CDK2 and CK1. Phosphorylation probably enhances transcriptional activity. Dephosphorylation at Ser-118 by PPP5C inhibits its transactivation activity. Phosphorylated by LMTK3 (in vitro). Post-translationally, ubiquitinated; regulated by LATS1 via DCAF1 it leads to ESR1 proteasomal degradation. Deubiquitinated by OTUB1. Ubiquitinated by STUB1/CHIP; in the CA1 hippocampal region following loss of endogenous circulating estradiol (17-beta-estradiol/E2). Ubiquitinated by UBR5, leading to its degradation: UBR5 specifically recognizes and binds ligand-bound ESR1 when it is not associated with coactivators (NCOAs). In presence of NCOAs, the UBR5-degron is not accessible, preventing its ubiquitination and degradation. Palmitoylated at Cys-447 by ZDHHC7 and ZDHHC21. Palmitoylation is required for plasma membrane targeting and for rapid intracellular signaling via ERK and AKT kinases and cAMP generation, but not for signaling mediated by the nuclear hormone receptor. In terms of processing, dimethylated by PRMT1 at Arg-260. The methylation may favor cytoplasmic localization. Demethylated by JMJD6 at Arg-260.

It localises to the nucleus. The protein resides in the cytoplasm. The protein localises to the golgi apparatus. Its subcellular location is the cell membrane. In terms of biological role, nuclear hormone receptor. The steroid hormones and their receptors are involved in the regulation of eukaryotic gene expression and affect cellular proliferation and differentiation in target tissues. Ligand-dependent nuclear transactivation involves either direct homodimer binding to a palindromic estrogen response element (ERE) sequence or association with other DNA-binding transcription factors, such as AP-1/c-Jun, c-Fos, ATF-2, Sp1 and Sp3, to mediate ERE-independent signaling. Ligand binding induces a conformational change allowing subsequent or combinatorial association with multiprotein coactivator complexes through LXXLL motifs of their respective components. Mutual transrepression occurs between the estrogen receptor (ER) and NF-kappa-B in a cell-type specific manner. Decreases NF-kappa-B DNA-binding activity and inhibits NF-kappa-B-mediated transcription from the IL6 promoter and displace RELA/p65 and associated coregulators from the promoter. Recruited to the NF-kappa-B response element of the CCL2 and IL8 promoters and can displace CREBBP. Present with NF-kappa-B components RELA/p65 and NFKB1/p50 on ERE sequences. Can also act synergistically with NF-kappa-B to activate transcription involving respective recruitment adjacent response elements; the function involves CREBBP. Can activate the transcriptional activity of TFF1. Also mediates membrane-initiated estrogen signaling involving various kinase cascades. Essential for MTA1-mediated transcriptional regulation of BRCA1 and BCAS3. Maintains neuronal survival in response to ischemic reperfusion injury when in the presence of circulating estradiol (17-beta-estradiol/E2). The protein is Estrogen receptor (ESR1) of Sus scrofa (Pig).